Here is a 718-residue protein sequence, read N- to C-terminus: F-box/LRR-repeat protein 18 (718 aa).

One can recognise an F-box domain in the interval 25 to 72; the sequence is GVHLLGFSDEILLHILSHVPSTDLILNVRRTCRKLAALCLDKSLIHTV. 12 LRR repeats span residues 77–103, 104–128, 129–153, 177–201, 324–352, 367–392, 393–422, 468–492, 516–540, 542–567, 572–597, and 599–623; these read DYQA…SMAG, CYWL…NLSG, CHLT…AIDV, KQTL…LLYF, CTLS…NLSG, EDDI…NLSA, AHHH…SLPV, CPQP…ELIG, AQSV…TLAQ, PSVL…SLAN, GKVV…RLEQ, and YFSA…CLVS.

In terms of assembly, directly interacts with SKP1 and CUL1.

In terms of biological role, substrate-recognition component of the SCF (SKP1-CUL1-F-box protein)-type E3 ubiquitin ligase complex. This chain is F-box/LRR-repeat protein 18 (FBXL18), found in Homo sapiens (Human).